The sequence spans 196 residues: Peptidyl-tRNA hydrolase (196 aa).

Tyrosine 17 contacts tRNA. The active-site Proton acceptor is histidine 22. Residues phenylalanine 68, asparagine 70, and asparagine 116 each coordinate tRNA.

This sequence belongs to the PTH family. In terms of assembly, monomer.

The protein resides in the cytoplasm. It carries out the reaction an N-acyl-L-alpha-aminoacyl-tRNA + H2O = an N-acyl-L-amino acid + a tRNA + H(+). Functionally, hydrolyzes ribosome-free peptidyl-tRNAs (with 1 or more amino acids incorporated), which drop off the ribosome during protein synthesis, or as a result of ribosome stalling. Catalyzes the release of premature peptidyl moieties from peptidyl-tRNA molecules trapped in stalled 50S ribosomal subunits, and thus maintains levels of free tRNAs and 50S ribosomes. This chain is Peptidyl-tRNA hydrolase, found in Serratia proteamaculans (strain 568).